A 281-amino-acid chain; its full sequence is Pantothenate synthetase (281 aa).

Position 30–37 (30–37) interacts with ATP; that stretch reads MGYYHAGH. His37 serves as the catalytic Proton donor. Residue Gln61 participates in (R)-pantoate binding. Position 61 (Gln61) interacts with beta-alanine. 147–150 contributes to the ATP binding site; the sequence is GEKD. Residue Gln153 participates in (R)-pantoate binding. ATP-binding positions include Val176 and 184–187; that span reads MSSR.

The protein belongs to the pantothenate synthetase family. As to quaternary structure, homodimer.

The protein localises to the cytoplasm. The catalysed reaction is (R)-pantoate + beta-alanine + ATP = (R)-pantothenate + AMP + diphosphate + H(+). Its pathway is cofactor biosynthesis; (R)-pantothenate biosynthesis; (R)-pantothenate from (R)-pantoate and beta-alanine: step 1/1. Catalyzes the condensation of pantoate with beta-alanine in an ATP-dependent reaction via a pantoyl-adenylate intermediate. The sequence is that of Pantothenate synthetase from Oleidesulfovibrio alaskensis (strain ATCC BAA-1058 / DSM 17464 / G20) (Desulfovibrio alaskensis).